Here is a 340-residue protein sequence, read N- to C-terminus: S-adenosylmethionine:tRNA ribosyltransferase-isomerase (340 aa).

It belongs to the QueA family. As to quaternary structure, monomer.

Its subcellular location is the cytoplasm. It carries out the reaction 7-aminomethyl-7-carbaguanosine(34) in tRNA + S-adenosyl-L-methionine = epoxyqueuosine(34) in tRNA + adenine + L-methionine + 2 H(+). Its pathway is tRNA modification; tRNA-queuosine biosynthesis. Transfers and isomerizes the ribose moiety from AdoMet to the 7-aminomethyl group of 7-deazaguanine (preQ1-tRNA) to give epoxyqueuosine (oQ-tRNA). The chain is S-adenosylmethionine:tRNA ribosyltransferase-isomerase from Vesicomyosocius okutanii subsp. Calyptogena okutanii (strain HA).